The following is a 465-amino-acid chain: GTPase Der (465 aa).

2 consecutive EngA-type G domains span residues 27–190 (PVLA…PEAP) and 202–375 (RRIA…AGWE). GTP is bound by residues 33–40 (GRPNVGKS), 80–84 (DTGGW), 142–145 (NKVD), 208–215 (GRPNVGKS), 255–259 (DTAGI), and 320–323 (NKWD). One can recognise a KH-like domain in the interval 376 to 458 (TRVPTGRLNA…PIHISVRVRE (83 aa)).

The protein belongs to the TRAFAC class TrmE-Era-EngA-EngB-Septin-like GTPase superfamily. EngA (Der) GTPase family. In terms of assembly, associates with the 50S ribosomal subunit.

Functionally, GTPase that plays an essential role in the late steps of ribosome biogenesis. The polypeptide is GTPase Der (Streptomyces coelicolor (strain ATCC BAA-471 / A3(2) / M145)).